Consider the following 408-residue polypeptide: Phosphoglycerate kinase (408 aa).

Substrate contacts are provided by residues Asp24–Asn26, Arg39, His62–Arg65, Arg121, and Arg161. ATP-binding positions include Lys211, Gly307, Glu338, and Gly364–Ser367.

The protein belongs to the phosphoglycerate kinase family. Monomer.

The protein localises to the cytoplasm. It carries out the reaction (2R)-3-phosphoglycerate + ATP = (2R)-3-phospho-glyceroyl phosphate + ADP. Its pathway is carbohydrate degradation; glycolysis; pyruvate from D-glyceraldehyde 3-phosphate: step 2/5. The sequence is that of Phosphoglycerate kinase from Pseudarthrobacter chlorophenolicus (strain ATCC 700700 / DSM 12829 / CIP 107037 / JCM 12360 / KCTC 9906 / NCIMB 13794 / A6) (Arthrobacter chlorophenolicus).